A 443-amino-acid chain; its full sequence is Phosphoglucosamine mutase (443 aa).

Residue Ser100 is the Phosphoserine intermediate of the active site. Mg(2+) is bound by residues Ser100, Asp240, Asp242, and Asp244. The residue at position 100 (Ser100) is a Phosphoserine.

This sequence belongs to the phosphohexose mutase family. The cofactor is Mg(2+). In terms of processing, activated by phosphorylation.

The enzyme catalyses alpha-D-glucosamine 1-phosphate = D-glucosamine 6-phosphate. In terms of biological role, catalyzes the conversion of glucosamine-6-phosphate to glucosamine-1-phosphate. The sequence is that of Phosphoglucosamine mutase from Carboxydothermus hydrogenoformans (strain ATCC BAA-161 / DSM 6008 / Z-2901).